The sequence spans 1553 residues: Dual oxidase 1 (1553 aa).

The N-terminal stretch at 1-21 (MGFRLALAWTLLVGPWMPMGA) is a signal peptide. At 22 to 596 (RNSISWEVQR…YFKGSGFGFG (575 aa)) the chain is on the extracellular side. The peroxidase-like; mediates peroxidase activity stretch occupies residues 26–593 (SWEVQRFDGW…MRDYFKGSGF (568 aa)). N-linked (GlcNAc...) asparagine glycans are attached at residues Asn94, Asn342, Asn354, and Asn534. Residues 597 to 617 (VTIGTLCCFPLVSLLSAWIVA) form a helical membrane-spanning segment. Residues 618–1046 (QLRRRNFKRL…KRFVENYRRH (429 aa)) are Cytoplasmic-facing. 3 consecutive EF-hand domains span residues 815 to 850 (PQDM…FMKG), 851 to 886 (SPEE…FIEI), and 895 to 930 (QLTE…HDSE). Ca(2+) contacts are provided by Asp828, Asp830, Asn832, Tyr834, Glu839, Asp864, Asp866, Asn868, and Glu875. The interaction with TXNDC11 stretch occupies residues 956 to 1250 (YISQEKLCPS…GSFALIQLPR (295 aa)). The chain crosses the membrane as a helical span at residues 1047-1067 (IGCLAVFYTIAGGLFLERAYY). Over 1068 to 1082 (YAFAAHHMGITDTTR) the chain is Extracellular. A helical transmembrane segment spans residues 1083–1103 (VGIILSRGTAASISFMFSYIL). Positions 1089–1271 (RGTAASISFM…YVGDKLVSLS (183 aa)) constitute a Ferric oxidoreductase domain. Residues 1104 to 1138 (LTMCRNLITFLRETFLNRYVPFDAAVDFHRLIAST) lie on the Cytoplasmic side of the membrane. Residues 1139-1159 (AIILTVLHSAGHVVNVYLFSI) form a helical membrane-spanning segment. Residues 1160–1190 (SPLSVLSCLFPGLFHDNGSEFPQKYYWWFFQ) are Extracellular-facing. A helical transmembrane segment spans residues 1191–1211 (TVPGLTGVMLLLILAIMYVFA). Over 1212–1228 (SHHFRRCSFRGFWLTHH) the chain is Cytoplasmic. A helical membrane pass occupies residues 1229–1249 (LYILLYMLLIIHGSFALIQLP). Residue Arg1250 is a topological domain, extracellular. The helical transmembrane segment at 1251-1271 (FHIFFLVPALIYVGDKLVSLS) threads the bilayer. The region spanning 1272–1378 (RKKVEISVVK…DGPFGEGHQE (107 aa)) is the FAD-binding FR-type domain. At 1272–1553 (RKKVEISVVK…THFSHHYENF (282 aa)) the chain is on the cytoplasmic side.

In the N-terminal section; belongs to the peroxidase family. Interacts with TXNDC11, TPO and CYBA. In terms of processing, N-glycosylated. As to expression, specifically expressed in thyroid.

The protein localises to the apical cell membrane. It carries out the reaction NADH + O2 + H(+) = H2O2 + NAD(+). It catalyses the reaction NADPH + O2 + H(+) = H2O2 + NADP(+). It participates in hormone biosynthesis; thyroid hormone biosynthesis. With respect to regulation, the NADPH oxidase activity is calcium-dependent. Peroxidase activity is inhibited by aminobenzohydrazide. Functionally, generates hydrogen peroxide which is required for the activity of thyroid peroxidase/TPO and lactoperoxidase/LPO. Plays a role in thyroid hormones synthesis and lactoperoxidase-mediated antimicrobial defense at the surface of mucosa. May have its own peroxidase activity through its N-terminal peroxidase-like domain. The protein is Dual oxidase 1 (DUOX1) of Sus scrofa (Pig).